The following is an 849-amino-acid chain: Trehalose-phosphatase (849 aa).

The interval 1–558 is glycosyltransferase; it reads MPSGAQGNTQ…VKALESHMTT (558 aa).

In the N-terminal section; belongs to the glycosyltransferase 20 family. The protein in the C-terminal section; belongs to the trehalose phosphatase family. Mg(2+) serves as cofactor.

The protein resides in the cytoplasm. The protein localises to the nucleus. It catalyses the reaction alpha,alpha-trehalose 6-phosphate + H2O = alpha,alpha-trehalose + phosphate. It functions in the pathway carbohydrate biosynthesis. Its function is as follows. Phosphatase catalytic subunit of the trehalose synthase complex that catalyzes the production of trehalose from glucose-6-phosphate and UDP-glucose in a two step process. In Schizosaccharomyces pombe (strain 972 / ATCC 24843) (Fission yeast), this protein is Trehalose-phosphatase (tps2).